We begin with the raw amino-acid sequence, 465 residues long: Cyclin-A1 (465 aa).

The protein belongs to the cyclin family. Cyclin AB subfamily. Interacts with the CDK2 and the CDC2 protein kinases to form a serine/threonine kinase holoenzyme complex. The cyclin subunit imparts substrate specificity to the complex. Does not bind CDK4 and CDK5 (in vitro). The cyclin A1-CDK2 complex interacts with transcription factor E2F-1 and RB proteins. Found in a complex with CDK2, CABLES1 and CCNE1. Interacts with INCA1. Interacts with KLHDC9. Post-translationally, polyubiquitinated via 'Lys-11'-linked ubiquitin by the anaphase-promoting complex (APC/C), leading to its degradation by the proteasome. Deubiquitinated and stabilized by USP37 enables entry into S phase. Ubiquitinated during the G1 phase by the SCF(FBXO31) complex, leading to its proteasomal degradation. In terms of tissue distribution, very high levels in testis and very low levels in brain. Also found in myeloid leukemia cell lines.

It is found in the nucleus. Its function is as follows. May be involved in the control of the cell cycle at the G1/S (start) and G2/M (mitosis) transitions. May primarily function in the control of the germline meiotic cell cycle and additionally in the control of mitotic cell cycle in some somatic cells. This chain is Cyclin-A1 (CCNA1), found in Homo sapiens (Human).